We begin with the raw amino-acid sequence, 355 residues long: Peptide chain release factor 1 (355 aa).

Position 231 is an N5-methylglutamine (glutamine 231). Positions 283-303 (LAKESEARKSQVGSGDRSERI) are disordered.

Belongs to the prokaryotic/mitochondrial release factor family. Methylated by PrmC. Methylation increases the termination efficiency of RF1.

It is found in the cytoplasm. In terms of biological role, peptide chain release factor 1 directs the termination of translation in response to the peptide chain termination codons UAG and UAA. The sequence is that of Peptide chain release factor 1 from Campylobacter lari (strain RM2100 / D67 / ATCC BAA-1060).